Here is a 282-residue protein sequence, read N- to C-terminus: Chlorite dismutase (282 aa).

An N-terminal signal peptide occupies residues 1–31 (MTNLSIHNFKLSLVAAVIGSAMVMTSSPVAA). Residue Glu-104 coordinates Ca(2+). Heme is bound at residue His-204. Catalysis depends on Arg-217, which acts as the Proton acceptor. Ca(2+) contacts are provided by Asp-226 and Thr-265.

Belongs to the chlorite dismutase family. As to quaternary structure, homopentamer. The cofactor is heme b.

The protein resides in the periplasm. The enzyme catalyses chloride + O2 = chlorite. In terms of biological role, catalyzes the heme-dependent decomposition of chlorite to O(2) and chloride with high efficiency and specificity. Used to detoxify chlorite, a by-product of the reduction of perchlorate, a primarily anthropogenic pollutant, in perchlorate-respiring bacteria. In Dechloromonas aromatica (strain RCB), this protein is Chlorite dismutase.